A 542-amino-acid polypeptide reads, in one-letter code: CTP synthase (542 aa).

The amidoligase domain stretch occupies residues 1-265 (MARYVFITGG…DNEVLAAFGI (265 aa)). S13 serves as a coordination point for CTP. Residue S13 coordinates UTP. ATP-binding positions include 14-19 (SLGKGI) and D71. Residues D71 and E139 each contribute to the Mg(2+) site. CTP-binding positions include 146 to 148 (DIE), 186 to 191 (KTKPTQ), and K222. Residues 186–191 (KTKPTQ) and K222 each bind UTP. The region spanning 291–541 (TIAIVGKYTG…IEAALEQSRL (251 aa)) is the Glutamine amidotransferase type-1 domain. G353 lines the L-glutamine pocket. C380 functions as the Nucleophile; for glutamine hydrolysis in the catalytic mechanism. L-glutamine is bound by residues 381-384 (FGMQ), E404, and R469. Residues H514 and E516 contribute to the active site.

The protein belongs to the CTP synthase family. As to quaternary structure, homotetramer.

The catalysed reaction is UTP + L-glutamine + ATP + H2O = CTP + L-glutamate + ADP + phosphate + 2 H(+). The enzyme catalyses L-glutamine + H2O = L-glutamate + NH4(+). It carries out the reaction UTP + NH4(+) + ATP = CTP + ADP + phosphate + 2 H(+). Its pathway is pyrimidine metabolism; CTP biosynthesis via de novo pathway; CTP from UDP: step 2/2. Allosterically activated by GTP, when glutamine is the substrate; GTP has no effect on the reaction when ammonia is the substrate. The allosteric effector GTP functions by stabilizing the protein conformation that binds the tetrahedral intermediate(s) formed during glutamine hydrolysis. Inhibited by the product CTP, via allosteric rather than competitive inhibition. Functionally, catalyzes the ATP-dependent amination of UTP to CTP with either L-glutamine or ammonia as the source of nitrogen. Regulates intracellular CTP levels through interactions with the four ribonucleotide triphosphates. The protein is CTP synthase of Rhizobium meliloti (strain 1021) (Ensifer meliloti).